The chain runs to 93 residues: Putative aspartate aminotransferase (93 aa).

This sequence belongs to the class-I pyridoxal-phosphate-dependent aminotransferase family. In terms of assembly, homodimer. Pyridoxal 5'-phosphate serves as cofactor.

It localises to the cytoplasm. The enzyme catalyses L-aspartate + 2-oxoglutarate = oxaloacetate + L-glutamate. The chain is Putative aspartate aminotransferase from Methylorubrum extorquens (Methylobacterium dichloromethanicum).